A 274-amino-acid chain; its full sequence is Large ribosomal subunit protein uL2 (274 aa).

The interval 223–274 is disordered; that stretch reads VAMNPVDHPHGGGEGRTSGGRHPVTPWGVPTKGYKTRSNKRTDKYIVRRRNK.

Belongs to the universal ribosomal protein uL2 family. As to quaternary structure, part of the 50S ribosomal subunit. Forms a bridge to the 30S subunit in the 70S ribosome.

One of the primary rRNA binding proteins. Required for association of the 30S and 50S subunits to form the 70S ribosome, for tRNA binding and peptide bond formation. It has been suggested to have peptidyltransferase activity; this is somewhat controversial. Makes several contacts with the 16S rRNA in the 70S ribosome. The sequence is that of Large ribosomal subunit protein uL2 from Shewanella sp. (strain ANA-3).